Reading from the N-terminus, the 205-residue chain is Regulatory protein RecX (205 aa).

This sequence belongs to the RecX family.

It localises to the cytoplasm. In terms of biological role, modulates RecA activity. The protein is Regulatory protein RecX of Finegoldia magna (strain ATCC 29328 / DSM 20472 / WAL 2508) (Peptostreptococcus magnus).